Consider the following 341-residue polypeptide: MIKNDLLLKALKGESVERPPVWMMRQAGRYLPDFMKLKEKYDFFTRCRTPELATEITVMPIRQIGPDAAILFSDILVVPQAMNIEVEMKPGVGPWLPNPIDSPKKVEQVIVPDVNEELGYVFEAIKMTKQELNDEVPLIGFAGSPWTILCYCVQGQGSKTFDKAKRFCFMNPIAAHTLLQKITDTTIAYLKEKVKAGVDAVQLFDSWGGLLEPKDYQEFSWKYMQQIIEALKDEVPVIAYGKGCWFALDKMAKSGAAALGVDWTCEARNARYLSGGEITLQGNFDPARLYSKPIEIKYMVNDMIKAFGKDRYIANLGHGILPNIPVDNAKAFVDAVKEYKE.

Substrate contacts are provided by residues 25 to 29 (RQAGR), Phe44, Asp74, Tyr151, Ser206, and His318.

Belongs to the uroporphyrinogen decarboxylase family. As to quaternary structure, homodimer.

The protein localises to the cytoplasm. The enzyme catalyses uroporphyrinogen III + 4 H(+) = coproporphyrinogen III + 4 CO2. It participates in porphyrin-containing compound metabolism; protoporphyrin-IX biosynthesis; coproporphyrinogen-III from 5-aminolevulinate: step 4/4. In terms of biological role, catalyzes the decarboxylation of four acetate groups of uroporphyrinogen-III to yield coproporphyrinogen-III. The chain is Uroporphyrinogen decarboxylase from Christiangramia forsetii (strain DSM 17595 / CGMCC 1.15422 / KT0803) (Gramella forsetii).